We begin with the raw amino-acid sequence, 536 residues long: Organic anion transporter 3 (536 aa).

Over 1-11 (MTFSEILDRVG) the chain is Cytoplasmic. Ser4 carries the post-translational modification Phosphoserine. Residues 12–32 (SMGPFQYLHVTLLALPVLGIA) form a helical membrane-spanning segment. Residues 33–123 (NHNLLQIFTA…LVCSSNKLKE (91 aa)) are Extracellular-facing. 2 N-linked (GlcNAc...) asparagine glycosylation sites follow: Asn81 and Asn86. The helical transmembrane segment at 124–144 (MAQSIFMAGILVGGPVIGELS) threads the bilayer. Over 145 to 158 (DRFGRKPILTWSYL) the chain is Cytoplasmic. A helical transmembrane segment spans residues 159–179 (MLAASGSGAAFSPSLPVYMIF). A topological domain (extracellular) is located at residue Arg180. The helical transmembrane segment at 181–201 (FLCGCSISGISLSTVILNVEW) threads the bilayer. The Cytoplasmic portion of the chain corresponds to 202–212 (VPTSMRAISST). Residues 213–233 (SIGYCYTIGQFILSGLAYAIP) form a helical membrane-spanning segment. At 234-236 (QWR) the chain is on the extracellular side. Residues 237-257 (WLQLTSSAPFFIFSLLSWWVP) traverse the membrane as a helical segment. At 258 to 327 (ESIRWLVLSG…FRVSILRRVT (70 aa)) the chain is on the cytoplasmic side. The chain crosses the membrane as a helical span at residues 328-348 (FCLSLAWFSTGFAYYSLAMGV). The Extracellular portion of the chain corresponds to 349–354 (EEFGVN). The helical transmembrane segment at 355–375 (IYILQIIFGGVDIPAKFITIL) threads the bilayer. Topologically, residues 376–383 (SLSYLGRR) are cytoplasmic. Residues 384–404 (ITQSFLLLLAGGAILALIFVP) traverse the membrane as a helical segment. The Extracellular segment spans residues 405–411 (SEMQLLR). Residues 412 to 432 (TALAVFGKGCLSGSFSCLFLY) form a helical membrane-spanning segment. The Cytoplasmic segment spans residues 433-471 (TSELYPTVLRQTGMGISNVWARVGSMIAPLVKITGELQP). A helical transmembrane segment spans residues 472-492 (FIPNVIFGTTALLGGSAAFFL). At 493-536 (LETLNRPLPETIEDIQNWHKQVQKTKQESEAEKASQIIPLKTGG) the chain is on the extracellular side. The segment at 515–536 (QKTKQESEAEKASQIIPLKTGG) is disordered.

The protein belongs to the major facilitator (TC 2.A.1) superfamily. Organic cation transporter (TC 2.A.1.19) family. In terms of tissue distribution, expressed in the liver, brain, kidney, choroid plexus and weakly in the eye. Moderately expressed (at protein level) in the brain capillary endothelial cells (BCEC).

The protein localises to the basolateral cell membrane. It carries out the reaction estrone 3-sulfate(out) + glutarate(in) = estrone 3-sulfate(in) + glutarate(out). It catalyses the reaction estrone 3-sulfate(in) + 2-oxoglutarate(out) = estrone 3-sulfate(out) + 2-oxoglutarate(in). The enzyme catalyses glutarate(in) + 2-oxoglutarate(out) = glutarate(out) + 2-oxoglutarate(in). The catalysed reaction is urate(in) + 2-oxoglutarate(out) = urate(out) + 2-oxoglutarate(in). It carries out the reaction taurocholate(out) + glutarate(in) = taurocholate(in) + glutarate(out). It catalyses the reaction dehydroepiandrosterone 3-sulfate(out) + glutarate(in) = dehydroepiandrosterone 3-sulfate(in) + glutarate(out). The enzyme catalyses prostaglandin F2alpha(out) + glutarate(in) = prostaglandin F2alpha(in) + glutarate(out). The catalysed reaction is prostaglandin F2alpha(out) + 2-oxoglutarate(in) = prostaglandin F2alpha(in) + 2-oxoglutarate(out). It carries out the reaction (R)-carnitine(out) + 2-oxoglutarate(in) = (R)-carnitine(in) + 2-oxoglutarate(out). It catalyses the reaction glutarate(in) + (R)-carnitine(out) = glutarate(out) + (R)-carnitine(in). The enzyme catalyses prostaglandin E2(out) + 2-oxoglutarate(in) = prostaglandin E2(in) + 2-oxoglutarate(out). The catalysed reaction is prostaglandin E2(out) + glutarate(in) = prostaglandin E2(in) + glutarate(out). It carries out the reaction urate(in) + glutarate(out) = urate(out) + glutarate(in). It catalyses the reaction taurocholate(out) + 2-oxoglutarate(in) = taurocholate(in) + 2-oxoglutarate(out). The enzyme catalyses dehydroepiandrosterone 3-sulfate(out) + 2-oxoglutarate(in) = dehydroepiandrosterone 3-sulfate(in) + 2-oxoglutarate(out). The catalysed reaction is kynurenate(out) + a dicarboxylate(in) = kynurenate(in) + a dicarboxylate(out). It carries out the reaction (indol-3-yl)acetate(out) + a dicarboxylate(in) = (indol-3-yl)acetate(in) + a dicarboxylate(out). It catalyses the reaction indoxyl sulfate(out) + a dicarboxylate(in) = indoxyl sulfate(in) + a dicarboxylate(out). The enzyme catalyses N-benzoylglycine(out) + a dicarboxylate(in) = N-benzoylglycine(in) + a dicarboxylate(out). The catalysed reaction is 3-carboxy-4-methyl-5-propyl-2-furanpropanoate(out) + a dicarboxylate(in) = 3-carboxy-4-methyl-5-propyl-2-furanpropanoate(in) + a dicarboxylate(out). It carries out the reaction (6R)-L-erythro-5,6,7,8-tetrahydrobiopterin(out) + a dicarboxylate(in) = (6R)-L-erythro-5,6,7,8-tetrahydrobiopterin(in) + a dicarboxylate(out). It catalyses the reaction L-erythro-7,8-dihydrobiopterin(out) + a dicarboxylate(in) = L-erythro-7,8-dihydrobiopterin(in) + a dicarboxylate(out). The enzyme catalyses L-sepiapterin(out) + a dicarboxylate(in) = L-sepiapterin(in) + a dicarboxylate(out). In terms of biological role, functions as an organic anion/dicarboxylate exchanger that couples organic anion uptake indirectly to the sodium gradient. Transports organic anions such as estrone 3-sulfate (E1S) and urate in exchange for dicarboxylates such as glutarate or ketoglutarate (2-oxoglutarate). Plays an important role in the excretion of endogenous and exogenous organic anions, especially from the kidney and the brain. E1S transport is pH- and chloride-dependent and may also involve E1S/cGMP exchange. Responsible for the transport of prostaglandin E2 (PGE2) and prostaglandin F2(alpha) (PGF2(alpha)) in the basolateral side of the renal tubule. Involved in the transport of neuroactive tryptophan metabolites kynurenate and xanthurenate. Functions as a biopterin transporters involved in the uptake and the secretion of coenzymes tetrahydrobiopterin (BH4), dihydrobiopterin (BH2) and sepiapterin to urine, thereby determining baseline levels of blood biopterins. May be involved in the basolateral transport of steviol, a metabolite of the popular sugar substitute stevioside. May participate in the detoxification/ renal excretion of drugs and xenobiotics, such as the histamine H(2)-receptor antagonists fexofenadine and cimetidine, the antibiotic benzylpenicillin (PCG), the anionic herbicide 2,4-dichloro-phenoxyacetate (2,4-D), the diagnostic agent p-aminohippurate (PAH), the antiviral acyclovir (ACV), and the mycotoxin ochratoxin (OTA), by transporting these exogenous organic anions across the cell membrane in exchange for dicarboxylates such as 2-oxoglutarate. Contributes to the renal uptake of potent uremic toxins (indoxyl sulfate (IS), indole acetate (IA), hippurate/N-benzoylglycine (HA) and 3-carboxy-4-methyl-5-propyl-2-furanpropionate (CMPF)), pravastatin, PCG, E1S and dehydroepiandrosterone sulfate (DHEAS), and is partly involved in the renal uptake of temocaprilat (an angiotensin-converting enzyme (ACE) inhibitor). May contribute to the release of cortisol in the adrenals. Involved in one of the detoxification systems on the choroid plexus (CP), removes substrates such as E1S or taurocholate (TC), PCG, 2,4-D and PAH, from the cerebrospinal fluid (CSF) to the blood for eventual excretion in urine and bile. Regulates the CSF concentration of histamine H(2)-receptor antagonists cimetidine and ranitidine at the CP. Also contributes to the uptake of several other organic compounds such as the prostanoids prostaglandin E(2) and prostaglandin F(2-alpha), L-carnitine, and the therapeutic drugs allopurinol, 6-mercaptopurine (6-MP) and 5-fluorouracil (5-FU). Mediates the uptake from brain of organic anions, such as E1S, PAH, and OTA. Mediates the transport of PAH, PCG, and the statins pravastatin and pitavastatin, from the cerebrum into the blood circulation across the blood-brain barrier (BBB). In summary, plays a role in the efflux of drugs and xenobiotics, helping reduce their undesired toxicological effects on the body. The protein is Organic anion transporter 3 (Slc22a8) of Rattus norvegicus (Rat).